The following is a 139-amino-acid chain: Putative pre-16S rRNA nuclease (139 aa).

It belongs to the YqgF nuclease family.

The protein resides in the cytoplasm. Functionally, could be a nuclease involved in processing of the 5'-end of pre-16S rRNA. The sequence is that of Putative pre-16S rRNA nuclease from Streptococcus thermophilus (strain ATCC BAA-491 / LMD-9).